A 261-amino-acid polypeptide reads, in one-letter code: Undecaprenyl-diphosphatase (261 aa).

The next 8 helical transmembrane spans lie at 9–31 (ALLLGVVEGLTEFLPVSSTGHLT), 46–66 (FLKTFLVAIQLGAILAVLLLY), 80–100 (IAVAFVPTGVIGFLFYPLIKG), 102–122 (ILGNDAVVAFFLFFVGAVLLF), 137–157 (ALPLARVAWIGVFQGLAALFP), 180–200 (AEFSFLLALPTMFAAVGYDLW), 209–229 (GGWSLLLLGFLAALVTALVTV), and 240–260 (GFRPFALYRMALAAVYAFFFL).

It belongs to the UppP family.

Its subcellular location is the cell inner membrane. It carries out the reaction di-trans,octa-cis-undecaprenyl diphosphate + H2O = di-trans,octa-cis-undecaprenyl phosphate + phosphate + H(+). Its function is as follows. Catalyzes the dephosphorylation of undecaprenyl diphosphate (UPP). Confers resistance to bacitracin. The polypeptide is Undecaprenyl-diphosphatase (Thermus thermophilus (strain ATCC 27634 / DSM 579 / HB8)).